The following is a 361-amino-acid chain: Chorismate synthase (361 aa).

Arg-48 and Arg-54 together coordinate NADP(+). Residues 125–127, 238–239, Gly-278, 293–297, and Arg-319 contribute to the FMN site; these read RSS, NA, and KPTSS.

This sequence belongs to the chorismate synthase family. Homotetramer. Requires FMNH2 as cofactor.

It carries out the reaction 5-O-(1-carboxyvinyl)-3-phosphoshikimate = chorismate + phosphate. Its pathway is metabolic intermediate biosynthesis; chorismate biosynthesis; chorismate from D-erythrose 4-phosphate and phosphoenolpyruvate: step 7/7. Its function is as follows. Catalyzes the anti-1,4-elimination of the C-3 phosphate and the C-6 proR hydrogen from 5-enolpyruvylshikimate-3-phosphate (EPSP) to yield chorismate, which is the branch point compound that serves as the starting substrate for the three terminal pathways of aromatic amino acid biosynthesis. This reaction introduces a second double bond into the aromatic ring system. The protein is Chorismate synthase of Enterobacter sp. (strain 638).